The following is a 198-amino-acid chain: Pyridoxal 5'-phosphate synthase subunit PdxT (198 aa).

49 to 51 (GES) contacts L-glutamine. Residue Cys81 is the Nucleophile of the active site. L-glutamine is bound by residues Arg113 and 141–142 (IR). Active-site charge relay system residues include His177 and Glu179.

It belongs to the glutaminase PdxT/SNO family. As to quaternary structure, in the presence of PdxS, forms a dodecamer of heterodimers. Only shows activity in the heterodimer.

It carries out the reaction aldehydo-D-ribose 5-phosphate + D-glyceraldehyde 3-phosphate + L-glutamine = pyridoxal 5'-phosphate + L-glutamate + phosphate + 3 H2O + H(+). The enzyme catalyses L-glutamine + H2O = L-glutamate + NH4(+). The protein operates within cofactor biosynthesis; pyridoxal 5'-phosphate biosynthesis. Its function is as follows. Catalyzes the hydrolysis of glutamine to glutamate and ammonia as part of the biosynthesis of pyridoxal 5'-phosphate. The resulting ammonia molecule is channeled to the active site of PdxS. This Mycobacterium ulcerans (strain Agy99) protein is Pyridoxal 5'-phosphate synthase subunit PdxT.